The chain runs to 261 residues: RING finger and CHY zinc finger domain-containing protein 1 (261 aa).

The CHY-type zinc-finger motif lies at 13-80 (QERGQRGCEH…AQQTCEECST (68 aa)). Positions 20, 22, 33, 34, 40, 43, 44, 50, 62, 65, 75, 78, 87, 90, 101, 102, 105, 108, 118, 119, 122, 125, 134, and 136 each coordinate Zn(2+). The CTCHY-type zinc-finger motif lies at 82–144 (FGEYYCDICH…KCIENVSRQN (63 aa)). Residues 145–189 (CPICLEDIHTSRVVAHVLPCGHLLHRTCYEEMLKEGYRCPLCMHS) form an RING-type zinc finger. Ser257 carries the phosphoserine modification.

Monomer and homodimer. Interacts with AR, MDM2, KAT5, PLAG1, PLAGL2, COPE, UBE2D2 and GORAB/NTKLBP1. Subject to ubiquitination and proteasomal degradation. Interaction with PLAGL2 or KAT5 enhances protein stability.

The protein localises to the nucleus. Its subcellular location is the nucleus speckle. It localises to the cytoplasm. It carries out the reaction S-ubiquitinyl-[E2 ubiquitin-conjugating enzyme]-L-cysteine + [acceptor protein]-L-lysine = [E2 ubiquitin-conjugating enzyme]-L-cysteine + N(6)-ubiquitinyl-[acceptor protein]-L-lysine.. The protein operates within protein modification; protein ubiquitination. Its function is as follows. E3 ubiquitin-protein ligase that mediates ubiquitination of target proteins, including p53/TP53, TP73, HDAC1 and CDKN1B. Mediates ubiquitination and degradation of p53/TP53; preferentially acts on tetrameric p53/TP53. Catalyzes monoubiquitinates the translesion DNA polymerase POLH. Involved in the ribosome-associated quality control (RQC) pathway, which mediates the extraction of incompletely synthesized nascent chains from stalled ribosomes: RCHY1 acts downstream of NEMF and recognizes CAT tails associated with stalled nascent chains, leading to their ubiquitination and degradation. Has no E3 ubiquitin-protein ligase activity. In Homo sapiens (Human), this protein is RING finger and CHY zinc finger domain-containing protein 1 (RCHY1).